The following is a 552-amino-acid chain: MRTPYCVADYLLDRLTDCGADHLFGVPGDYNLQFLDHVIDSPDICWVGCANELNASYAADGYARCKGFAALLTTFGVGELSAMNGIAGSYAEHVPVLHIVGAPGTAAQQRGELLHHTLGDGEFRHFYHMSEPITVAQAVLTEQNACYEIDRVLTTMLRERRPGYLMLPADVAKKAATPPVNALTHKQAHADSACLKAFRDAAENKLAMSKRTALLADFLVLRHGLKHALQKWVKEVPMAHATMLMGKGIFDERQAGFYGTYSGSASTGAVKEAIEGADTVLCVGTRFTDTLTAGFTHQLTPAQTIEVQPHAARVGDVWFTGIPMNQAIETLVELCKQHVHAGLMSSSSGAIPFPQPDGSLTQENFWRTLQTFIRPGDIILADQGTSAFGAIDLRLPADVNFIVQPLWGSIGYTLAAAFGAQTACPNRRVIVLTGDGAAQLTIQELGSMLRDKQHPIILVLNNEGYTVERAIHGAEQRYNDIALWNWTHIPQALSLDPQSECWRVSEAEQLADVLEKVAHHERLSLIEVMLPKADIPPLLGALTKALEACNNA.

Glu52 contacts thiamine diphosphate. The thiamine pyrophosphate binding stretch occupies residues 385-466 (TSAFGAIDLR…ILVLNNEGYT (82 aa)). Mg(2+) contacts are provided by Asp435 and Asn462.

This sequence belongs to the TPP enzyme family. In terms of assembly, homotetramer. Requires a metal cation as cofactor. Thiamine diphosphate is required as a cofactor.

The enzyme catalyses indole-3-pyruvate + H(+) = indole-3-acetaldehyde + CO2. It participates in plant hormone metabolism; auxin biosynthesis. The sequence is that of Indole-3-pyruvate decarboxylase (ipdC) from Enterobacter cloacae.